Consider the following 217-residue polypeptide: Cytidylate kinase (217 aa).

Position 10 to 18 (10 to 18 (GPAGAGKST)) interacts with ATP.

Belongs to the cytidylate kinase family. Type 1 subfamily.

The protein localises to the cytoplasm. The catalysed reaction is CMP + ATP = CDP + ADP. The enzyme catalyses dCMP + ATP = dCDP + ADP. In Alkaliphilus oremlandii (strain OhILAs) (Clostridium oremlandii (strain OhILAs)), this protein is Cytidylate kinase.